A 1372-amino-acid chain; its full sequence is Serine protease pic autotransporter (1372 aa).

A signal peptide spans 1 to 55 (MNKVYSLKYCPVTGGLIAVSELARRVIKKTCRRLTHILLAGIPAICLCYSQISQA). In terms of domain architecture, Peptidase S6 spans 56–301 (GIVRSDIAYQ…NVIPTDYLNQ (246 aa)). Catalysis depends on charge relay system residues histidine 127, aspartate 155, and serine 258. The 267-residue stretch at 1106–1372 (DTNGDAGAWA…AVNANFRYMF (267 aa)) folds into the Autotransporter domain.

Post-translationally, cleaved to release the mature protein from the outer membrane.

The protein localises to the periplasm. Its subcellular location is the secreted. The protein resides in the cell surface. It localises to the cell outer membrane. Its function is as follows. Involved in intestinal colonization, displays in vitro mucinolytic activity, serum resistance, and hemagglutination. Important to penetrate the intestinal mucus layer. The protein is Serine protease pic autotransporter (pic) of Escherichia coli O44:H18 (strain 042 / EAEC).